Reading from the N-terminus, the 834-residue chain is WW domain-containing adapter protein with coiled-coil homolog (834 aa).

Disordered stretches follow at residues 1–247 (MVMH…WSEH), 268–411 (KPKE…SVAT), and 430–504 (VTGA…GAKG). Positions 22–31 (HTSYQSSKYS) are enriched in low complexity. Residues 33–50 (SKRDYERDRSSNYRDRDL) show a composition bias toward basic and acidic residues. Gly residues predominate over residues 53–77 (GAGGGGGGGSAGGGGGGSGNGGGPL). A compositionally biased stretch (basic and acidic residues) spans 96–108 (RSHDLRDRSDHRG). Gly residues predominate over residues 109–119 (GGGGNGRGGSG). Basic and acidic residues-rich tracts occupy residues 127-168 (KMRD…DRRG), 181-246 (SSRE…DWSE), and 268-303 (KPKEWVDRERNLPRDQHREKDYRDKDRDRDRDDRFS). Residues 244-271 (WSEHVSSSGKMYYYNCKTEISQWEKPKE) form the WW domain. Polar residues-rich tracts occupy residues 304-314 (RSTYKHSNSSR) and 350-363 (GDSTPTSEASYSLS). Residues 369–384 (HGGGPGGGGPGGGGGS) show a composition bias toward gly residues. Composition is skewed to low complexity over residues 402-411 (TANSSASVAT) and 431-466 (TGATMLPTMSGMLNSNSSNSAGGSSSNASSSSLRNS). A compositionally biased stretch (polar residues) spans 472-496 (GSTSGTTVPTLGSQDPHQHHLNSNA).

As to expression, expressed in adult head and thorax and in larval central nervous system and fat body.

It localises to the nucleus. The protein resides in the lysosome. Functionally, acts as a linker between gene transcription and histone H2B monoubiquitination at 'Lys-118'. Regulates the cell-cycle checkpoint activation in response to DNA damage. Positive regulator of amino acid starvation-induced autophagy. Also acts as a negative regulator of basal autophagy. Positively regulates mTor activity. Promotes, in an energy-dependent manner, the assembly of the TTT complex and the RUVBL complex composed of pont and rept into the TTT-RUVBL complex. This leads to dimerization of the mTORC1 complex and its subsequent activation. May negatively regulate the ubiquitin proteasome pathway. Required for habituation, a form of non-associative learning. This Drosophila melanogaster (Fruit fly) protein is WW domain-containing adapter protein with coiled-coil homolog.